The primary structure comprises 287 residues: ATP synthase gamma chain (287 aa).

It belongs to the ATPase gamma chain family. In terms of assembly, F-type ATPases have 2 components, CF(1) - the catalytic core - and CF(0) - the membrane proton channel. CF(1) has five subunits: alpha(3), beta(3), gamma(1), delta(1), epsilon(1). CF(0) has three main subunits: a, b and c.

Its subcellular location is the cell membrane. Produces ATP from ADP in the presence of a proton gradient across the membrane. The gamma chain is believed to be important in regulating ATPase activity and the flow of protons through the CF(0) complex. The sequence is that of ATP synthase gamma chain from Staphylococcus carnosus (strain TM300).